The chain runs to 994 residues: Myosin IA heavy chain (994 aa).

The Myosin motor domain occupies 12–720; the sequence is VGVEDLIMLT…PLFLLEDKRN (709 aa). 105-112 contributes to the ATP binding site; the sequence is GESGAGKT. Positions 574–654 are actin-binding; the sequence is TFIPTDKKRP…RAGYCYRQTF (81 aa). IQ domains follow at residues 723–744 and 745–774; these read LNDLATKIGSVWKMYKQRKWYL and RTLAAIKIQRTYRGWLLVRECVKLKNQSIS. The 189-residue stretch at 782–970 folds into the TH1 domain; it reads RNRQSIKLSK…ANSPSFTAKA (189 aa).

It belongs to the TRAFAC class myosin-kinesin ATPase superfamily. Myosin family. Myosin I heavy chain is single-headed. Dimer of a heavy and a light chain. Inability to self-assemble into filaments.

Actin-based motor protein, possibly involved in a wide range of motile processes, such as cell movement across a surface, and extension and retraction of pseudopodia or lamellipodia. The protein is Myosin IA heavy chain (myoA) of Dictyostelium discoideum (Social amoeba).